A 302-amino-acid chain; its full sequence is Oxygen-dependent coproporphyrinogen-III oxidase (302 aa).

Residue Ser-94 coordinates substrate. A divalent metal cation contacts are provided by His-98 and His-108. His-108 serves as the catalytic Proton donor. 110–112 (NVR) contacts substrate. 2 residues coordinate a divalent metal cation: His-147 and His-177. Residues 242-277 (YVEFNLVWDRGTLFGLQSGGRTESILMSMPPLARWE) are important for dimerization. 260 to 262 (GGR) contributes to the substrate binding site.

It belongs to the aerobic coproporphyrinogen-III oxidase family. As to quaternary structure, homodimer. A divalent metal cation serves as cofactor.

The protein localises to the cytoplasm. The enzyme catalyses coproporphyrinogen III + O2 + 2 H(+) = protoporphyrinogen IX + 2 CO2 + 2 H2O. The protein operates within porphyrin-containing compound metabolism; protoporphyrin-IX biosynthesis; protoporphyrinogen-IX from coproporphyrinogen-III (O2 route): step 1/1. Functionally, involved in the heme biosynthesis. Catalyzes the aerobic oxidative decarboxylation of propionate groups of rings A and B of coproporphyrinogen-III to yield the vinyl groups in protoporphyrinogen-IX. In Photorhabdus laumondii subsp. laumondii (strain DSM 15139 / CIP 105565 / TT01) (Photorhabdus luminescens subsp. laumondii), this protein is Oxygen-dependent coproporphyrinogen-III oxidase.